The sequence spans 206 residues: Endoplasmic reticulum transmembrane protein YET-like (206 aa).

Topologically, residues 1-2 (ME) are lumenal. A helical membrane pass occupies residues 3 to 23 (FLMTLVFLVLLVEIVFCTFFM). Over 24–46 (LPVSMHLRKNVYNKLDKLFGGQN) the chain is Cytoplasmic. A helical transmembrane segment spans residues 47-67 (AKIFLKVLALLVIIVFCDSIV). The Lumenal segment spans residues 68-101 (NSYNINKKLHTPELTGAKFDRQNEYTRMFRYQRN). A helical transmembrane segment spans residues 102–122 (SYICGFCLYLFFLIYRSQGII). The Cytoplasmic portion of the chain corresponds to 123–206 (SQLSNVEASK…KKPKTQKKDD (84 aa)). A coiled-coil region spans residues 140–198 (KNNLNTVETLLSENEKLKTEIKDLKKMEKEHKAMKSQAENTTKEYLKLQEEYNQLLGKK). A Di-lysine motif motif is present at residues 203-206 (KKDD).

Belongs to the BCAP29/BCAP31 family.

It localises to the endoplasmic reticulum membrane. Functionally, may play a role in anterograde transport of membrane proteins from the endoplasmic reticulum to the Golgi. The protein is Endoplasmic reticulum transmembrane protein YET-like of Dictyostelium discoideum (Social amoeba).